The following is a 94-amino-acid chain: CRISPR-associated endoribonuclease Cas2 1 (94 aa).

Residue D8 coordinates Mg(2+).

The protein belongs to the CRISPR-associated endoribonuclease Cas2 protein family. As to quaternary structure, homodimer, forms a heterotetramer with a Cas1 homodimer. Requires Mg(2+) as cofactor.

In terms of biological role, CRISPR (clustered regularly interspaced short palindromic repeat), is an adaptive immune system that provides protection against mobile genetic elements (viruses, transposable elements and conjugative plasmids). CRISPR clusters contain sequences complementary to antecedent mobile elements and target invading nucleic acids. CRISPR clusters are transcribed and processed into CRISPR RNA (crRNA). Functions as a ssRNA-specific endoribonuclease. Involved in the integration of spacer DNA into the CRISPR cassette. In Synechocystis sp. (strain ATCC 27184 / PCC 6803 / Kazusa), this protein is CRISPR-associated endoribonuclease Cas2 1.